Reading from the N-terminus, the 407-residue chain is 1-deoxy-D-xylulose 5-phosphate reductoisomerase (407 aa).

Residues threonine 25, glycine 26, serine 27, isoleucine 28, asparagine 53, and asparagine 136 each contribute to the NADPH site. A 1-deoxy-D-xylulose 5-phosphate-binding site is contributed by lysine 137. Residue glutamate 138 participates in NADPH binding. Aspartate 162 contacts Mn(2+). 1-deoxy-D-xylulose 5-phosphate is bound by residues serine 163, glutamate 164, serine 188, and histidine 211. Glutamate 164 is a binding site for Mn(2+). Glycine 217 provides a ligand contact to NADPH. 4 residues coordinate 1-deoxy-D-xylulose 5-phosphate: serine 224, asparagine 229, lysine 230, and glutamate 233. Glutamate 233 lines the Mn(2+) pocket.

It belongs to the DXR family. It depends on Mg(2+) as a cofactor. Requires Mn(2+) as cofactor.

The catalysed reaction is 2-C-methyl-D-erythritol 4-phosphate + NADP(+) = 1-deoxy-D-xylulose 5-phosphate + NADPH + H(+). It functions in the pathway isoprenoid biosynthesis; isopentenyl diphosphate biosynthesis via DXP pathway; isopentenyl diphosphate from 1-deoxy-D-xylulose 5-phosphate: step 1/6. Catalyzes the NADPH-dependent rearrangement and reduction of 1-deoxy-D-xylulose-5-phosphate (DXP) to 2-C-methyl-D-erythritol 4-phosphate (MEP). This chain is 1-deoxy-D-xylulose 5-phosphate reductoisomerase, found in Rhodopseudomonas palustris (strain BisB18).